We begin with the raw amino-acid sequence, 129 residues long: Core protein OPG073 (129 aa).

Belongs to the orthopoxvirus OPG073 family.

The protein localises to the virion. The chain is Core protein OPG073 (OPG073) from Homo sapiens (Human).